We begin with the raw amino-acid sequence, 291 residues long: GTPase Era (291 aa).

The Era-type G domain occupies Lys2–Glu167. Residues Gly10 to Ser17 are G1. Gly10 to Ser17 provides a ligand contact to GTP. Positions Asn36–Arg40 are G2. Residues Asp57–Gly60 form a G3 region. GTP-binding positions include Asp57–Leu61 and Asn116–Asp119. The tract at residues Asn116–Asp119 is G4. Residues Tyr146–Ser148 are G5. The region spanning Tyr186–Lys274 is the KH type-2 domain.

It belongs to the TRAFAC class TrmE-Era-EngA-EngB-Septin-like GTPase superfamily. Era GTPase family. Monomer.

It is found in the cytoplasm. Its subcellular location is the cell inner membrane. Its function is as follows. An essential GTPase that binds both GDP and GTP, with rapid nucleotide exchange. Plays a role in 16S rRNA processing and 30S ribosomal subunit biogenesis and possibly also in cell cycle regulation and energy metabolism. The sequence is that of GTPase Era from Campylobacter jejuni subsp. jejuni serotype O:23/36 (strain 81-176).